The following is a 130-amino-acid chain: Large ribosomal subunit protein bL17 (130 aa).

It belongs to the bacterial ribosomal protein bL17 family. In terms of assembly, part of the 50S ribosomal subunit. Contacts protein L32.

This is Large ribosomal subunit protein bL17 from Shewanella pealeana (strain ATCC 700345 / ANG-SQ1).